Here is a 289-residue protein sequence, read N- to C-terminus: Ribosomal protein L11 methyltransferase (289 aa).

Positions 135, 156, 179, and 225 each coordinate S-adenosyl-L-methionine.

This sequence belongs to the methyltransferase superfamily. PrmA family.

The protein localises to the cytoplasm. It carries out the reaction L-lysyl-[protein] + 3 S-adenosyl-L-methionine = N(6),N(6),N(6)-trimethyl-L-lysyl-[protein] + 3 S-adenosyl-L-homocysteine + 3 H(+). In terms of biological role, methylates ribosomal protein L11. The sequence is that of Ribosomal protein L11 methyltransferase from Chlorobaculum tepidum (strain ATCC 49652 / DSM 12025 / NBRC 103806 / TLS) (Chlorobium tepidum).